The following is a 226-amino-acid chain: NADH-ubiquinone oxidoreductase chain 6 (226 aa).

Transmembrane regions (helical) follow at residues 2 to 22 (STLG…FVIL), 28 to 48 (IYSI…LLTV), 56 to 76 (IYIL…VMMI), 90 to 110 (YNIY…ILIT), and 169 to 189 (IWFI…IYIT).

Belongs to the complex I subunit 6 family.

The protein localises to the mitochondrion membrane. The catalysed reaction is a ubiquinone + NADH + 5 H(+)(in) = a ubiquinol + NAD(+) + 4 H(+)(out). Functionally, core subunit of the mitochondrial membrane respiratory chain NADH dehydrogenase (Complex I) that is believed to belong to the minimal assembly required for catalysis. Complex I functions in the transfer of electrons from NADH to the respiratory chain. The immediate electron acceptor for the enzyme is believed to be ubiquinone. This Dictyostelium citrinum (Slime mold) protein is NADH-ubiquinone oxidoreductase chain 6 (nad6).